We begin with the raw amino-acid sequence, 61 residues long: Small ribosomal subunit protein uS14 (61 aa).

Zn(2+)-binding residues include Cys24, Cys27, Cys40, and Cys43.

Belongs to the universal ribosomal protein uS14 family. Zinc-binding uS14 subfamily. Part of the 30S ribosomal subunit. Contacts proteins S3 and S10. Zn(2+) is required as a cofactor.

Functionally, binds 16S rRNA, required for the assembly of 30S particles and may also be responsible for determining the conformation of the 16S rRNA at the A site. This chain is Small ribosomal subunit protein uS14, found in Frankia casuarinae (strain DSM 45818 / CECT 9043 / HFP020203 / CcI3).